The chain runs to 88 residues: Molybdopterin synthase sulfur carrier subunit (88 aa).

1-thioglycine; alternate is present on G88. G88 carries the post-translational modification Glycyl adenylate; alternate.

The protein belongs to the MoaD family. MOCS2A subfamily. Heterotetramer; composed of 2 small (MOCS2A) and 2 large (MOCS2B) subunits. In terms of processing, C-terminal thiocarboxylation occurs in 2 steps, it is first acyl-adenylated (-COAMP) via the hesA/moeB/thiF part of MOCS3, then thiocarboxylated (-COSH) via the rhodanese domain of MOCS3. As to expression, widely expressed. Highest levels are found in heart and skeletal muscle. Lower levels are present in brain, kidney and pancreas. Very low levels are found in lung and peripheral blood leukocytes.

It localises to the cytoplasm. The protein localises to the cytosol. It functions in the pathway cofactor biosynthesis; molybdopterin biosynthesis. Functionally, acts as a sulfur carrier required for molybdopterin biosynthesis. Component of the molybdopterin synthase complex that catalyzes the conversion of precursor Z into molybdopterin by mediating the incorporation of 2 sulfur atoms into precursor Z to generate a dithiolene group. In the complex, serves as sulfur donor by being thiocarboxylated (-COSH) at its C-terminus by MOCS3. After interaction with MOCS2B, the sulfur is then transferred to precursor Z to form molybdopterin. This Homo sapiens (Human) protein is Molybdopterin synthase sulfur carrier subunit.